A 182-amino-acid chain; its full sequence is Envelope glycoprotein L (182 aa).

A signal peptide spans 1-39; sequence MRRSAARGRAVSSTQTAMGAGAAIAVWAAALIALYSSCA. One can recognise a gL alphaherpesvirus-type domain in the interval 52–182; that stretch reads ANASDTIGRL…RPEKTAPGGV (131 aa). A disulfide bond links Cys73 and Cys109.

The protein belongs to the herpesviridae glycoprotein L (gL) family. Alphaherpesvirinae gL subfamily. In terms of assembly, interacts with glycoprotein H (gH); this interaction is necessary for the correct processing and cell surface expression of gH. The heterodimer gH/gL seems to interact with gB trimers during fusion. O-glycosylated, and sialylated.

Its subcellular location is the virion membrane. It localises to the host cell membrane. The protein resides in the host Golgi apparatus. The protein localises to the host trans-Golgi network. Its function is as follows. The heterodimer glycoprotein H-glycoprotein L is required for the fusion of viral and plasma membranes leading to virus entry into the host cell. Acts as a functional inhibitor of gH and maintains gH in an inhibited form. Upon binding to host integrins, gL dissociates from gH leading to activation of the viral fusion glycoproteins gB and gH. The polypeptide is Envelope glycoprotein L (Amazona oratrix (yellow-headed parrot)).